We begin with the raw amino-acid sequence, 600 residues long: Glutamine--fructose-6-phosphate aminotransferase [isomerizing] (600 aa).

Cys-2 (nucleophile; for GATase activity) is an active-site residue. One can recognise a Glutamine amidotransferase type-2 domain in the interval 2–217 (CGIVGYIGQL…DKEMVIVTDK (216 aa)). 2 SIS domains span residues 283–422 (ISNA…SRGK) and 452–590 (IARE…VDKP). Residue Lys-595 is the For Fru-6P isomerization activity of the active site.

In terms of assembly, homodimer.

It is found in the cytoplasm. The enzyme catalyses D-fructose 6-phosphate + L-glutamine = D-glucosamine 6-phosphate + L-glutamate. Its function is as follows. Catalyzes the first step in hexosamine metabolism, converting fructose-6P into glucosamine-6P using glutamine as a nitrogen source. The chain is Glutamine--fructose-6-phosphate aminotransferase [isomerizing] from Bacillus licheniformis (strain ATCC 14580 / DSM 13 / JCM 2505 / CCUG 7422 / NBRC 12200 / NCIMB 9375 / NCTC 10341 / NRRL NRS-1264 / Gibson 46).